Consider the following 70-residue polypeptide: UPF0337 protein BC_3635 (70 aa).

The protein belongs to the UPF0337 (CsbD) family.

The protein is UPF0337 protein BC_3635 of Bacillus cereus (strain ATCC 14579 / DSM 31 / CCUG 7414 / JCM 2152 / NBRC 15305 / NCIMB 9373 / NCTC 2599 / NRRL B-3711).